Consider the following 579-residue polypeptide: Fatty-acid amide hydrolase 1 (579 aa).

A helical membrane pass occupies residues 9 to 29; it reads ALSGLSGVCLACSLLSAAVVL. Over 30-403 the chain is Cytoplasmic; the sequence is RWTRSQTARG…GDFVDPCLGD (374 aa). Residue Lys142 is the Charge relay system of the active site. Substrate contacts are provided by residues Met191, Ser217, and 238-241; that span reads IGGS. The active-site Charge relay system is the Ser217. Ser241 serves as the catalytic Acyl-ester intermediate. At Ser241 the chain carries Phosphoserine. The stretch at 404–433 is an intramembrane region; sequence LVLVLKLPRWFKKLLSFLLKPLFPRLAAFL. The Cytoplasmic portion of the chain corresponds to 434-579; the sequence is NSMCPRSAEK…RLMTPEKRPS (146 aa).

The protein belongs to the amidase family. In terms of assembly, homodimer.

It localises to the endoplasmic reticulum membrane. Its subcellular location is the golgi apparatus membrane. The enzyme catalyses N-(5Z,8Z,11Z,14Z-eicosatetraenoyl)-ethanolamine + H2O = ethanolamine + (5Z,8Z,11Z,14Z)-eicosatetraenoate. It catalyses the reaction (9Z)-octadecenamide + H2O = (9Z)-octadecenoate + NH4(+). The catalysed reaction is 2-(5Z,8Z,11Z,14Z-eicosatetraenoyl)-glycerol + H2O = glycerol + (5Z,8Z,11Z,14Z)-eicosatetraenoate + H(+). It carries out the reaction N-(9Z-hexadecenoyl) ethanolamine + H2O = (9Z)-hexadecenoate + ethanolamine. The enzyme catalyses N-(9Z-octadecenoyl) ethanolamine + H2O = ethanolamine + (9Z)-octadecenoate. It catalyses the reaction N-octadecanoyl ethanolamine + H2O = octadecanoate + ethanolamine. The catalysed reaction is N-docosanoyl-ethanolamine + H2O = docosanoate + ethanolamine. It carries out the reaction N-tetracosanoyl-taurine + H2O = tetracosanoate + taurine. The enzyme catalyses N-(15Z-tetracosenoyl)-ethanolamine + H2O = (15Z)-tetracosenoate + ethanolamine. It catalyses the reaction N-(9Z-octadecenoyl)-taurine + H2O = taurine + (9Z)-octadecenoate. The catalysed reaction is N-docosanoyl-taurine + H2O = docosanoate + taurine. It carries out the reaction N-(15Z-tetracosenoyl)-taurine + H2O = (15Z)-tetracosenoate + taurine. The enzyme catalyses N-tricosanoyl-taurine + H2O = tricosanoate + taurine. It catalyses the reaction (9Z,12Z,15Z)-octadecatrienamide + H2O = (9Z,12Z,15Z)-octadecatrienoate + NH4(+). The catalysed reaction is (5Z,8Z,11Z,14Z)-eicosatetraenamide + H2O = (5Z,8Z,11Z,14Z)-eicosatetraenoate + NH4(+). It carries out the reaction (6Z)-octadecenamide + H2O = (6Z)-octadecenoate + NH4(+). The enzyme catalyses (15Z)-tetracosenamide + H2O = (15Z)-tetracosenoate + NH4(+). It catalyses the reaction (8Z,11Z,14Z)-eicosatrienamide + H2O = (8Z,11Z,14Z)-eicosatrienoate + NH4(+). The catalysed reaction is (11Z,14Z,17Z)-eicosatrienamide + H2O = (11Z,14Z,17Z)-eicosatrienoate + NH4(+). It carries out the reaction (11Z,14Z)-eicosadienamide + H2O = (11Z,14Z)-eicosadienoate + NH4(+). The enzyme catalyses (9Z,12Z)-octadecadienamide + H2O = (9Z,12Z)-octadecadienoate + NH4(+). It catalyses the reaction tetradecamide + H2O = tetradecanoate + NH4(+). The catalysed reaction is 1-O-methyl-(5Z,8Z,11Z,14Z)-eicosatetraenoate + H2O = methanol + (5Z,8Z,11Z,14Z)-eicosatetraenoate + H(+). It carries out the reaction (11Z)-eicosenamide + H2O = (11Z)-eicosenoate + NH4(+). The enzyme catalyses (9Z)-octadecenoate + glycine = N-(9Z-octadecenoyl)glycine + H2O. It catalyses the reaction N-(5Z,8Z,11Z,14Z)-eicosatetraenoyl-glycine + H2O = (5Z,8Z,11Z,14Z)-eicosatetraenoate + glycine. The catalysed reaction is N-(5Z,8Z,11Z,14Z-eicosatetraenoyl)-L-serine + H2O = (5Z,8Z,11Z,14Z)-eicosatetraenoate + L-serine. Inhibited the trifluoromethyl compound PF-3845. Catalyzes the hydrolysis of endogenous amidated lipids like the endocannabinoid anandamide (N-(5Z,8Z,11Z,14Z-eicosatetraenoyl)-ethanolamine), as well as other fatty amides such as the taurine-conjugated fatty acids (a structural class of central nervous system (CNS) metabolites), to their corresponding fatty acids, thereby regulating the signaling functions of these molecules. FAAH cooperates with PM20D1 in the hydrolysis of amino acid-conjugated fatty acids such as N-fatty acyl glycine and N-fatty acyl-L-serine, thereby acting as a physiological regulator of specific subsets of intracellular, but not of extracellular, N-fatty acyl amino acids. It can also catalyze the hydrolysis of the endocannabinoid 2-arachidonoylglycerol (2-(5Z,8Z,11Z,14Z-eicosatetraenoyl)-glycerol). The chain is Fatty-acid amide hydrolase 1 (Faah) from Mus musculus (Mouse).